The chain runs to 717 residues: Translation initiation factor eIF2B subunit epsilon (717 aa).

Residues 1-14 (MAATAAVPGAAAGR) are compositionally biased toward low complexity. Residues 1–37 (MAATAAVPGAAAGRASKRGGGGSGGGGTQGAEEEPPP) form a disordered region. Residue Arg18 is modified to Omega-N-methylarginine. Residues 18–29 (RGGGGSGGGGTQ) show a composition bias toward gly residues. Ser23 bears the Phosphoserine mark. Residues Lys57 and Lys99 each participate in a glycyl lysine isopeptide (Lys-Gly) (interchain with G-Cter in ubiquitin) cross-link. At Ser126 the chain carries Phosphoserine. Glycyl lysine isopeptide (Lys-Gly) (interchain with G-Cter in ubiquitin) cross-links involve residues Lys137 and Lys213. A Phosphothreonine modification is found at Thr318. A disordered region spans residues 442-479 (GSVISLHPPDAEEDEDDGQFSDDSGADQEKEKVKLKGY). Ser446, Ser462, and Ser465 each carry phosphoserine. Positions 452–467 (AEEDEDDGQFSDDSGA) are enriched in acidic residues. Residue Lys501 forms a Glycyl lysine isopeptide (Lys-Gly) (interchain with G-Cter in ubiquitin) linkage. Residues 517 to 538 (TEEESETESEGSVDPEELDSRA) form a disordered region. The segment covering 519–533 (EESETESEGSVDPEE) has biased composition (acidic residues). Phosphoserine occurs at positions 528 and 536. One can recognise a W2 domain in the interval 539–716 (GSPQLDDIRV…REAEEESSED (178 aa)). Ser540 is subject to Phosphoserine; by DYRK2. Ser713 carries the post-translational modification Phosphoserine.

The protein belongs to the eIF-2B gamma/epsilon subunits family. In terms of assembly, component of the translation initiation factor 2B (eIF2B) complex which is a heterodecamer of two sets of five different subunits: alpha, beta, gamma, delta and epsilon. Subunits alpha, beta and delta comprise a regulatory subcomplex and subunits epsilon and gamma comprise a catalytic subcomplex. Within the complex, the hexameric regulatory complex resides at the center, with the two heterodimeric catalytic subcomplexes bound on opposite sides. In terms of processing, phosphorylated at Ser-540 by DYRK2; this is required for subsequent phosphorylation by GSK3B. Phosphorylated on serine and threonine residues by GSK3B; phosphorylation inhibits its function. Post-translationally, polyubiquitinated, probably by NEDD4.

The protein resides in the cytoplasm. The protein localises to the cytosol. Activated by the chemical integrated stress response (ISR) inhibitor ISRIB which stimulates guanine nucleotide exchange factor activity for both phosphorylated and unphosphorylated eIF2. Functionally, acts as a component of the translation initiation factor 2B (eIF2B) complex, which catalyzes the exchange of GDP for GTP on eukaryotic initiation factor 2 (eIF2) gamma subunit. Its guanine nucleotide exchange factor activity is repressed when bound to eIF2 complex phosphorylated on the alpha subunit, thereby limiting the amount of methionyl-initiator methionine tRNA available to the ribosome and consequently global translation is repressed. This chain is Translation initiation factor eIF2B subunit epsilon (Eif2b5), found in Mus musculus (Mouse).